The primary structure comprises 145 residues: Large-conductance mechanosensitive channel (145 aa).

Transmembrane regions (helical) follow at residues 14-34 (VMDLAVGVIIGGAFGGIVKSL), 38-58 (LIMPIVGAIFGGFDFSNYFLP), and 81-101 (GSFLTVLINFLILAWIIFLMV).

It belongs to the MscL family. In terms of assembly, homopentamer.

The protein resides in the cell inner membrane. Its function is as follows. Channel that opens in response to stretch forces in the membrane lipid bilayer. May participate in the regulation of osmotic pressure changes within the cell. The polypeptide is Large-conductance mechanosensitive channel (Rhizobium etli (strain CIAT 652)).